A 367-amino-acid polypeptide reads, in one-letter code: MAAPEIPKKQKAVIYDNPGTVSTKVVELDVPEPGDNEVLINLTHSGVCHSDFGIMTNTWKILPFPTQPGQVGGHEGVGKVVKLGAGAEASGLKIGDRVGVKWISSACGQCPPCQDGADGLCFNQKVSGYYTPGTFQQYVLGPAQYVTPIPDGLPSAEAAPLLCAGVTVYASLKRSKAQPGQWIVISGAGGGLGHLAVQIAAKGMGLRVIGVDHGSKEELVKASGAEHFVDITKFPTGDKFEAISSHVKSLTTKGLGAHAVIVCTASNIAYAQSLLFLRYNGTMVCVGIPENEPQAIASAYPGLFIQKHVHVTGSAVGNRNEAIETMEFAARGVIKAHFREEKMEALTEIFKEMEEGKLQGRVVLDLS.

Zn(2+) contacts are provided by Cys-48, His-74, Cys-107, Cys-110, Cys-113, Cys-121, and Cys-163. Residues 187–193 (GAGGGLG), Asp-212, Lys-216, 286–288 (VGI), and Arg-361 each bind NAD(+).

It belongs to the zinc-containing alcohol dehydrogenase family. In terms of assembly, homotetramer. Zn(2+) serves as cofactor.

The protein localises to the cytoplasm. It catalyses the reaction a primary alcohol + NAD(+) = an aldehyde + NADH + H(+). It carries out the reaction a secondary alcohol + NAD(+) = a ketone + NADH + H(+). The polypeptide is Alcohol dehydrogenase 2 (alcB) (Emericella nidulans (strain FGSC A4 / ATCC 38163 / CBS 112.46 / NRRL 194 / M139) (Aspergillus nidulans)).